A 296-amino-acid chain; its full sequence is Cytidine deaminase (296 aa).

CMP/dCMP-type deaminase domains are found at residues 47–167 and 186–296; these read TEAE…FGPK and DSSD…VDPV. Substrate is bound at residue 88–90; that stretch reads NLE. Histidine 101 is a binding site for Zn(2+). The active-site Proton donor is the glutamate 103. Positions 128 and 131 each coordinate Zn(2+).

This sequence belongs to the cytidine and deoxycytidylate deaminase family. As to quaternary structure, homodimer. The cofactor is Zn(2+).

It catalyses the reaction cytidine + H2O + H(+) = uridine + NH4(+). The catalysed reaction is 2'-deoxycytidine + H2O + H(+) = 2'-deoxyuridine + NH4(+). In terms of biological role, this enzyme scavenges exogenous and endogenous cytidine and 2'-deoxycytidine for UMP synthesis. This chain is Cytidine deaminase, found in Shewanella sp. (strain W3-18-1).